Here is a 758-residue protein sequence, read N- to C-terminus: Putative transcriptional regulatory protein YJL206C (758 aa).

A DNA-binding region (zn(2)-C6 fungal-type) is located at residues 47 to 73 (CIACRKRKVRCSGNIPCRLCQTNSYEC).

It belongs to the ASG1 family.

Its subcellular location is the nucleus. The chain is Putative transcriptional regulatory protein YJL206C from Saccharomyces cerevisiae (strain ATCC 204508 / S288c) (Baker's yeast).